We begin with the raw amino-acid sequence, 149 residues long: UPF0756 membrane protein Nther_1957 (149 aa).

The next 4 helical transmembrane spans lie at 5–25, 52–72, 85–105, and 111–131; these read IVVL…LVAT, LGIL…DIMP, LIAV…VELL, and VMVG…GVPA.

This sequence belongs to the UPF0756 family.

The protein localises to the cell membrane. In Natranaerobius thermophilus (strain ATCC BAA-1301 / DSM 18059 / JW/NM-WN-LF), this protein is UPF0756 membrane protein Nther_1957.